We begin with the raw amino-acid sequence, 548 residues long: Beta-lactamase-like protein 2 (548 aa).

The signal sequence occupies residues 1–24; sequence MKIMNKQSITIFLIICFLINLILS. 4 N-linked (GlcNAc...) asparagine glycosylation sites follow: N237, N258, N443, and N459.

It belongs to the beta-lactamase family.

It localises to the secreted. This chain is Beta-lactamase-like protein 2, found in Dictyostelium discoideum (Social amoeba).